A 222-amino-acid chain; its full sequence is Phosphoribosylformylglycinamidine synthase subunit PurQ (222 aa).

Positions 3–222 constitute a Glutamine amidotransferase type-1 domain; it reads SAVIQLPGLN…LFESVLGRAA (220 aa). The Nucleophile role is filled by Cys86. Residues His196 and Glu198 contribute to the active site.

Part of the FGAM synthase complex composed of 1 PurL, 1 PurQ and 2 PurS subunits.

The protein resides in the cytoplasm. It carries out the reaction N(2)-formyl-N(1)-(5-phospho-beta-D-ribosyl)glycinamide + L-glutamine + ATP + H2O = 2-formamido-N(1)-(5-O-phospho-beta-D-ribosyl)acetamidine + L-glutamate + ADP + phosphate + H(+). The enzyme catalyses L-glutamine + H2O = L-glutamate + NH4(+). It participates in purine metabolism; IMP biosynthesis via de novo pathway; 5-amino-1-(5-phospho-D-ribosyl)imidazole from N(2)-formyl-N(1)-(5-phospho-D-ribosyl)glycinamide: step 1/2. Part of the phosphoribosylformylglycinamidine synthase complex involved in the purines biosynthetic pathway. Catalyzes the ATP-dependent conversion of formylglycinamide ribonucleotide (FGAR) and glutamine to yield formylglycinamidine ribonucleotide (FGAM) and glutamate. The FGAM synthase complex is composed of three subunits. PurQ produces an ammonia molecule by converting glutamine to glutamate. PurL transfers the ammonia molecule to FGAR to form FGAM in an ATP-dependent manner. PurS interacts with PurQ and PurL and is thought to assist in the transfer of the ammonia molecule from PurQ to PurL. This Chelativorans sp. (strain BNC1) protein is Phosphoribosylformylglycinamidine synthase subunit PurQ.